The following is a 402-amino-acid chain: Elongation factor Tu (402 aa).

Residues 10 to 212 (KPHVNIGTIG…AVDEYIPTPE (203 aa)) enclose the tr-type G domain. The interval 19–26 (GHVDHGKT) is G1. 19-26 (GHVDHGKT) contacts GTP. Thr-26 contacts Mg(2+). The segment at 60–64 (GITIA) is G2. Residues 81–84 (DCPG) form a G3 region. Residues 81–85 (DCPGH) and 136–139 (NKED) each bind GTP. The G4 stretch occupies residues 136–139 (NKED). The G5 stretch occupies residues 177–179 (SAF).

This sequence belongs to the TRAFAC class translation factor GTPase superfamily. Classic translation factor GTPase family. EF-Tu/EF-1A subfamily. In terms of assembly, monomer.

It localises to the cytoplasm. The enzyme catalyses GTP + H2O = GDP + phosphate + H(+). GTP hydrolase that promotes the GTP-dependent binding of aminoacyl-tRNA to the A-site of ribosomes during protein biosynthesis. In Aliarcobacter butzleri (strain RM4018) (Arcobacter butzleri), this protein is Elongation factor Tu.